The chain runs to 140 residues: MAQNKIEKSEEDWKSVLTPEQYHVLRQKGTERPFSGNLYYNKEKGIYTCAACGQELFSSDTKFESGTGWPSFYDVISSDRVRLHEDNSYFMKRIEVVCSRCGSHLGHVFEDGPEPTGQRYCINSVSLGFTKEEDTGKEKE.

The MsrB domain occupies 10–132 (EEDWKSVLTP…NSVSLGFTKE (123 aa)). The Zn(2+) site is built by Cys-49, Cys-52, Cys-98, and Cys-101. Cys-121 serves as the catalytic Nucleophile.

It belongs to the MsrB Met sulfoxide reductase family. The cofactor is Zn(2+).

The enzyme catalyses L-methionyl-[protein] + [thioredoxin]-disulfide + H2O = L-methionyl-(R)-S-oxide-[protein] + [thioredoxin]-dithiol. The protein is Peptide methionine sulfoxide reductase MsrB of Methanosarcina mazei (strain ATCC BAA-159 / DSM 3647 / Goe1 / Go1 / JCM 11833 / OCM 88) (Methanosarcina frisia).